The sequence spans 505 residues: Ribosomal RNA small subunit methyltransferase F (505 aa).

S-adenosyl-L-methionine-binding positions include 123-129 (ASAPGSK), glutamate 147, aspartate 174, and aspartate 192. The Nucleophile role is filled by cysteine 245. Residues 409-437 (GTNANNNSNTNPNNNANTNPNNNSNTNPR) form a disordered region. The span at 410–435 (TNANNNSNTNPNNNANTNPNNNSNTN) shows a compositional bias: low complexity.

The protein belongs to the class I-like SAM-binding methyltransferase superfamily. RsmB/NOP family.

It localises to the cytoplasm. The enzyme catalyses cytidine(1407) in 16S rRNA + S-adenosyl-L-methionine = 5-methylcytidine(1407) in 16S rRNA + S-adenosyl-L-homocysteine + H(+). Functionally, specifically methylates the cytosine at position 1407 (m5C1407) of 16S rRNA. This Shewanella denitrificans (strain OS217 / ATCC BAA-1090 / DSM 15013) protein is Ribosomal RNA small subunit methyltransferase F.